The following is a 362-amino-acid chain: Lipoprotein p35 (362 aa).

An N-terminal signal peptide occupies residues 1 to 30; that stretch reads MKIKKIKLLKALALTGAFGIVATVPVIVSS. Cys31 carries N-palmitoyl cysteine lipidation. A lipid anchor (S-diacylglycerol cysteine) is attached at Cys31. The segment at 33–53 is disordered; sequence STSENNGNGNGNGGTDGNTQQ.

Belongs to the p35 lipoprotein family. Post-translationally, the N-terminus is blocked.

The protein resides in the cell membrane. Its function is as follows. Major M.penetrans antigen. In Malacoplasma penetrans (Mycoplasma penetrans), this protein is Lipoprotein p35.